A 509-amino-acid chain; its full sequence is ATP synthase subunit alpha (509 aa).

169-176 lines the ATP pocket; that stretch reads GDRQTGKT.

It belongs to the ATPase alpha/beta chains family. F-type ATPases have 2 components, CF(1) - the catalytic core - and CF(0) - the membrane proton channel. CF(1) has five subunits: alpha(3), beta(3), gamma(1), delta(1), epsilon(1). CF(0) has three main subunits: a(1), b(2) and c(9-12). The alpha and beta chains form an alternating ring which encloses part of the gamma chain. CF(1) is attached to CF(0) by a central stalk formed by the gamma and epsilon chains, while a peripheral stalk is formed by the delta and b chains.

It localises to the cell inner membrane. The catalysed reaction is ATP + H2O + 4 H(+)(in) = ADP + phosphate + 5 H(+)(out). Functionally, produces ATP from ADP in the presence of a proton gradient across the membrane. The alpha chain is a regulatory subunit. This Methylobacterium nodulans (strain LMG 21967 / CNCM I-2342 / ORS 2060) protein is ATP synthase subunit alpha.